A 335-amino-acid chain; its full sequence is Beta-ketoacyl-[acyl-carrier-protein] synthase III 2 (335 aa).

Catalysis depends on residues Cys116 and His256. Residues 257–261 (QANVR) form an ACP-binding region. Residue Asn286 is part of the active site.

Belongs to the thiolase-like superfamily. FabH family. In terms of assembly, homodimer.

It localises to the cytoplasm. The enzyme catalyses malonyl-[ACP] + acetyl-CoA + H(+) = 3-oxobutanoyl-[ACP] + CO2 + CoA. It participates in lipid metabolism; fatty acid biosynthesis. Functionally, catalyzes the condensation reaction of fatty acid synthesis by the addition to an acyl acceptor of two carbons from malonyl-ACP. Catalyzes the first condensation reaction which initiates fatty acid synthesis and may therefore play a role in governing the total rate of fatty acid production. Possesses both acetoacetyl-ACP synthase and acetyl transacylase activities. Its substrate specificity determines the biosynthesis of branched-chain and/or straight-chain of fatty acids. In Bacteroides thetaiotaomicron (strain ATCC 29148 / DSM 2079 / JCM 5827 / CCUG 10774 / NCTC 10582 / VPI-5482 / E50), this protein is Beta-ketoacyl-[acyl-carrier-protein] synthase III 2.